Here is a 50-residue protein sequence, read N- to C-terminus: Photosystem II reaction center protein M (50 aa).

The chain crosses the membrane as a helical span at residues 7–27 (GFIASLLFVGVPTIFLIGLFI).

The protein belongs to the PsbM family. As to quaternary structure, PSII is composed of 1 copy each of membrane proteins PsbA, PsbB, PsbC, PsbD, PsbE, PsbF, PsbH, PsbI, PsbJ, PsbK, PsbL, PsbM, PsbT, PsbX, PsbY, Psb30/Ycf12, peripheral proteins PsbO, CyanoQ (PsbQ), PsbU, PsbV and a large number of cofactors. It forms dimeric complexes.

It localises to the cellular thylakoid membrane. Its function is as follows. One of the components of the core complex of photosystem II (PSII). PSII is a light-driven water:plastoquinone oxidoreductase that uses light energy to abstract electrons from H(2)O, generating O(2) and a proton gradient subsequently used for ATP formation. It consists of a core antenna complex that captures photons, and an electron transfer chain that converts photonic excitation into a charge separation. This subunit is found at the monomer-monomer interface. The sequence is that of Photosystem II reaction center protein M from Prochlorococcus marinus (strain MIT 9312).